The following is a 126-amino-acid chain: MNIIQQLEKEQFDKLSATKTIPEFGPGDTVIVNVKVVEGERTRVQAYEGVCIGRSGGGLNESFTVRKISYGEGVERVFPVMSPMIDSIKVVRRGKVRRAKLYYLRKLRGKSARIVEKKTDRAAATN.

This sequence belongs to the bacterial ribosomal protein bL19 family.

Its function is as follows. This protein is located at the 30S-50S ribosomal subunit interface and may play a role in the structure and function of the aminoacyl-tRNA binding site. The sequence is that of Large ribosomal subunit protein bL19 from Nitrobacter winogradskyi (strain ATCC 25391 / DSM 10237 / CIP 104748 / NCIMB 11846 / Nb-255).